Reading from the N-terminus, the 243-residue chain is 23S rRNA (guanosine-2'-O-)-methyltransferase RlmB (243 aa).

S-adenosyl-L-methionine-binding residues include Gly-196, Ile-216, and Leu-225.

This sequence belongs to the class IV-like SAM-binding methyltransferase superfamily. RNA methyltransferase TrmH family. RlmB subfamily. As to quaternary structure, homodimer.

The protein localises to the cytoplasm. It catalyses the reaction guanosine(2251) in 23S rRNA + S-adenosyl-L-methionine = 2'-O-methylguanosine(2251) in 23S rRNA + S-adenosyl-L-homocysteine + H(+). In terms of biological role, specifically methylates the ribose of guanosine 2251 in 23S rRNA. This is 23S rRNA (guanosine-2'-O-)-methyltransferase RlmB from Salmonella typhimurium (strain LT2 / SGSC1412 / ATCC 700720).